A 647-amino-acid polypeptide reads, in one-letter code: Chaperone protein HtpG (647 aa).

The interval 1–353 (MNAHVEQLEF…AQDMSLNVSR (353 aa)) is a; substrate-binding. The segment at 354-567 (EILQQDRQIK…AFGMTPALAR (214 aa)) is b. The tract at residues 568–647 (IYRASGQEVP…LLAERLARTL (80 aa)) is c.

This sequence belongs to the heat shock protein 90 family. As to quaternary structure, homodimer.

It localises to the cytoplasm. In terms of biological role, molecular chaperone. Has ATPase activity. The protein is Chaperone protein HtpG of Mycobacterium bovis (strain ATCC BAA-935 / AF2122/97).